Reading from the N-terminus, the 259-residue chain is Hemin import ATP-binding protein HmuV (259 aa).

An ABC transporter domain is found at 2–238 (IEARDLNVSI…ALLSEVFDCQ (237 aa)). 34-41 (GPNGSGKS) contacts ATP.

It belongs to the ABC transporter superfamily. Heme (hemin) importer (TC 3.A.1.14.5) family. In terms of assembly, the complex is composed of two ATP-binding proteins (HmuV), two transmembrane proteins (HmuU) and a solute-binding protein (HmuT).

It is found in the cell inner membrane. Part of the ABC transporter complex HmuTUV involved in hemin import. Responsible for energy coupling to the transport system. This chain is Hemin import ATP-binding protein HmuV, found in Chelativorans sp. (strain BNC1).